Reading from the N-terminus, the 449-residue chain is UDP-N-acetylmuramoylalanine--D-glutamate ligase (449 aa).

118–124 (GSNGKTT) lines the ATP pocket.

Belongs to the MurCDEF family.

It is found in the cytoplasm. It carries out the reaction UDP-N-acetyl-alpha-D-muramoyl-L-alanine + D-glutamate + ATP = UDP-N-acetyl-alpha-D-muramoyl-L-alanyl-D-glutamate + ADP + phosphate + H(+). It functions in the pathway cell wall biogenesis; peptidoglycan biosynthesis. Its function is as follows. Cell wall formation. Catalyzes the addition of glutamate to the nucleotide precursor UDP-N-acetylmuramoyl-L-alanine (UMA). The sequence is that of UDP-N-acetylmuramoylalanine--D-glutamate ligase from Leuconostoc mesenteroides subsp. mesenteroides (strain ATCC 8293 / DSM 20343 / BCRC 11652 / CCM 1803 / JCM 6124 / NCDO 523 / NBRC 100496 / NCIMB 8023 / NCTC 12954 / NRRL B-1118 / 37Y).